The sequence spans 826 residues: Lysine-specific histone demethylase 1B (826 aa).

The segment covering 1–11 (MAASRGRSKKR) has biased composition (basic residues). Positions 1–46 (MAASRGRSKKRSNLELSPDNLPLRSSGRQAKKKAVEIPDEDEDGSS) are disordered. Phosphoserine occurs at positions 17 and 26. 12 residues coordinate Zn(2+): cysteine 53, cysteine 58, cysteine 65, cysteine 73, histidine 84, histidine 90, cysteine 92, cysteine 95, cysteine 142, cysteine 147, cysteine 169, and cysteine 185. The CW-type zinc finger occupies 133 to 193 (DQQLPYWVQC…HCSFPEDLRV (61 aa)). Serine 253 carries the phosphoserine modification. Residues 279 to 298 (YQPNECGKALCVRPDVMELD) form a GLYR1-binding region. The SWIRM domain occupies 281 to 379 (PNECGKALCV…TGVLTVAAGQ (99 aa)). 389–445 (KSVLVVGAGPAGLAAARQLHNFGMKVTVLEAKDRIGGRVWDDKSFKGVVVGRGPQIV) is a binding site for FAD. Histone H3-binding stretches follow at residues 444-473 (IVNG…RCDL), 493-504 (FNALLDVVSEWR), and 544-578 (FHLS…AGDH). Residues 570–572 (FFA) are GLYR1-binding. FAD-binding positions include valine 604, glutamate 799, and 807–809 (QTV). The segment at 802–818 (NRHFPQTVTGAYLSGVR) is GLYR1-binding.

Belongs to the flavin monoamine oxidase family. As to quaternary structure, interacts with its cofactor GLYR1 at nucleosomes; this interaction stimulates H3K4me1 and H3K4me2 demethylation. In contrast to KDM1A, does not form a complex with RCOR1/CoREST. Possible accessory component of the polycomb repressive deubiquitinase (PR-DUB) complex, at least composed of BAP1, one of ASXL1, ASXL2 or (probably) ASXL3 and one of MBD5 or MBD6. The PR-DUB core associates with a number of accessory proteins, including FOXK1, FOXK2, KDM1B, HCFC1 and OGT; KDM1B specifically associates with ASXL2 PR-DUB complexes. FAD serves as cofactor. It depends on Zn(2+) as a cofactor. Expressed in growing oocytes and in intestinal gland.

Its subcellular location is the nucleus. It is found in the chromosome. The catalysed reaction is N(6),N(6)-dimethyl-L-lysyl(4)-[histone H3] + 2 A + 2 H2O = L-lysyl(4)-[histone H3] + 2 formaldehyde + 2 AH2. The enzyme catalyses N(6)-methyl-L-lysyl(4)-[histone H3] + A + H2O = L-lysyl(4)-[histone H3] + formaldehyde + AH2. Inhibited by tranylcypromine, but not by pargyline, deprenyl or rasagiline. Histone H3K4me1 and H3K4me2 demethylase activity is inhibited by DNA, this inhibition is released in complex with GLYR1. In terms of biological role, histone demethylase that demethylates 'Lys-4' of histone H3, a specific tag for epigenetic transcriptional activation, thereby acting as a corepressor. Required for de novo DNA methylation of a subset of imprinted genes during oogenesis. Acts by oxidizing the substrate by FAD to generate the corresponding imine that is subsequently hydrolyzed. Demethylates both mono- and di-methylated 'Lys-4' of histone H3. Has no effect on tri-methylated 'Lys-4', mono-, di- or tri-methylated 'Lys-9', mono-, di- or tri-methylated 'Lys-27', mono-, di- or tri-methylated 'Lys-36' of histone H3, or on mono-, di- or tri-methylated 'Lys-20' of histone H4. Its function is as follows. Histone demethylase that demethylates 'Lys-4' of histone H3, a specific tag for epigenetic transcriptional activation, thereby acting as a corepressor. Required for de novo DNA methylation of a subset of imprinted genes during oogenesis. Acts by oxidizing the substrate by FAD to generate the corresponding imine that is subsequently hydrolyzed. Demethylates both mono- and di-methylated 'Lys-4' of histone H3. Has no effect on tri-methylated 'Lys-4', mono-, di- or tri-methylated 'Lys-9', mono-, di- or tri-methylated 'Lys-27', mono-, di- or tri-methylated 'Lys-36' of histone H3, or on mono-, di- or tri-methylated 'Lys-20' of histone H4. Alone, it is unable to demethylate H3K4me on nucleosomes and requires the presence of GLYR1 to achieve such activity, they form a multifunctional enzyme complex that modifies transcribed chromatin and facilitates Pol II transcription through nucleosomes. The sequence is that of Lysine-specific histone demethylase 1B from Mus musculus (Mouse).